Reading from the N-terminus, the 310-residue chain is MKVAVIGAAGGIGQALALLLKNRLPAGSDLALYDIAPVTPGVAADLSHIPTHVSIKGYAGEDPTPALEGADVVLISAGVARKPGMDRADLFNVNAGIVKSLAERIAVVCPNACIGIITNPVNTTVPIAAEVLKKAGVYDKRKLFGVTTLDVIRSETFVAELKGQDPGEVRVPVIGGHSGVTILPLLSQVEGVEFSDEEIAALTKRIQNAGTEVVEAKAGGGSATLSMGQAACRFGLALVKALQGEEVIEYAYVEGNGEHASFFAQPVKLGKEGVEEILPYGELSDFEKAALDGMLETLNSDIQIGVDFVK.

NAD(+)-binding positions include 7-13 and Asp-34; that span reads GAAGGIG. Substrate-binding residues include Arg-81 and Arg-87. Residues Asn-94 and 117 to 119 each bind NAD(+); that span reads ITN. Positions 119 and 153 each coordinate substrate. The active-site Proton acceptor is the His-177. NAD(+) is bound at residue Met-227.

Belongs to the LDH/MDH superfamily. MDH type 1 family. In terms of assembly, homodimer.

The catalysed reaction is (S)-malate + NAD(+) = oxaloacetate + NADH + H(+). Functionally, catalyzes the reversible oxidation of malate to oxaloacetate. The protein is Malate dehydrogenase of Vibrio vulnificus (strain CMCP6).